The sequence spans 565 residues: MRWFLVLLLVALVSVEASRRSRLFKKLYQKASNYDAAPSNVQTVWYKNMKLDHFTWGDTRTFDMRVMWNNTFYKPGGPIFFYTGNEGGLESFVTATGMMFDLAPMFNASIIFAEHRFYGQTQPFGNQSYASLANVGYLTSEQALADYAELLTELKRDNNQFKMTFPAATQVISFGGSYGGMLSAWFRQKYPHIVKGAWAGSAPLIYMNGGGVDPGAFDHITSRTYIDNGCNRFILANAWNATLNLSSTDAGRQWLNNNTVFKLDPRTKIRNQTDGWNLNAYLREAIEYMAMVDYPYPTGFLEPLPAWPVTVACGYMNANGTSFSDKDLVKAVANAANIYYNYNRDPNFTYCIDFSICGDQGTGGLGGDELGWPWQECSEIIMAMCASGGSNDVFWNECGKDIYQTLQQGCVSIFKSMGWTPKNWNIDAVKTLYGYDLSGSSNLILTQGHLDPWSGGGYKVDQNNAARGIYVLEIPGSAHHLDLRQPNTCDPNTVTNARFQIIQILKCWVDPNCNTIPTISPLPSISIPNGDCKDVVGGYPWGQTTGATVSNSFILAILASLYAMF.

The N-terminal stretch at 1 to 17 (MRWFLVLLLVALVSVEA) is a signal peptide. N-linked (GlcNAc...) asparagine glycans are attached at residues Asn69, Asn107, and Asn126. Residue Ser177 is the Charge relay system of the active site. Asn240, Asn244, Asn257, Asn271, Asn319, and Asn347 each carry an N-linked (GlcNAc...) asparagine glycan. Residues Asp451 and His479 each act as charge relay system in the active site.

It belongs to the peptidase S28 family.

The chain is Putative serine protease pcp-1 (pcp-1) from Caenorhabditis elegans.